The primary structure comprises 729 residues: Fatty acid oxidation complex subunit alpha (729 aa).

Residues Met-1 to Asp-189 are enoyl-CoA hydratase/isomerase. Asp-296 is a binding site for substrate. The 3-hydroxyacyl-CoA dehydrogenase stretch occupies residues Ala-311–Ala-729. Residues Met-324, Asp-343, Val-400–Glu-402, Lys-407, and Ser-429 each bind NAD(+). His-450 (for 3-hydroxyacyl-CoA dehydrogenase activity) is an active-site residue. Position 453 (Asn-453) interacts with NAD(+). The substrate site is built by Asn-500 and Tyr-660.

In the N-terminal section; belongs to the enoyl-CoA hydratase/isomerase family. This sequence in the C-terminal section; belongs to the 3-hydroxyacyl-CoA dehydrogenase family. As to quaternary structure, heterotetramer of two alpha chains (FadB) and two beta chains (FadA).

It catalyses the reaction a (3S)-3-hydroxyacyl-CoA + NAD(+) = a 3-oxoacyl-CoA + NADH + H(+). The enzyme catalyses a (3S)-3-hydroxyacyl-CoA = a (2E)-enoyl-CoA + H2O. It carries out the reaction a 4-saturated-(3S)-3-hydroxyacyl-CoA = a (3E)-enoyl-CoA + H2O. The catalysed reaction is (3S)-3-hydroxybutanoyl-CoA = (3R)-3-hydroxybutanoyl-CoA. It catalyses the reaction a (3Z)-enoyl-CoA = a 4-saturated (2E)-enoyl-CoA. The enzyme catalyses a (3E)-enoyl-CoA = a 4-saturated (2E)-enoyl-CoA. Its pathway is lipid metabolism; fatty acid beta-oxidation. Functionally, involved in the aerobic and anaerobic degradation of long-chain fatty acids via beta-oxidation cycle. Catalyzes the formation of 3-oxoacyl-CoA from enoyl-CoA via L-3-hydroxyacyl-CoA. It can also use D-3-hydroxyacyl-CoA and cis-3-enoyl-CoA as substrate. The sequence is that of Fatty acid oxidation complex subunit alpha from Yersinia pseudotuberculosis serotype O:1b (strain IP 31758).